A 1644-amino-acid polypeptide reads, in one-letter code: Terminal uridylyltransferase 4 (1644 aa).

Disordered regions lie at residues 31–63 (NQTL…QNDI), 96–168 (CKAK…SLLL), and 205–257 (ALQN…EMDY). Over residues 36-46 (ARNDKSVKEIE) the composition is skewed to basic and acidic residues. Ser-104 carries the post-translational modification Phosphoserine. Polar residues predominate over residues 112 to 125 (TISQAKSEKATSLQ). Phosphoserine is present on residues Ser-134 and Ser-156. Residues 206–222 (LQNSPRSQKQQTCTDNT) are compositionally biased toward polar residues. The span at 238–252 (DLSKMKNDESNKENS) shows a compositional bias: basic and acidic residues. The interval 253 to 333 (SEMDYLENAT…KEKRHKKNIL (81 aa)) is required for interaction with LIN28A and pre-let-7 RNA. Zn(2+) is bound by residues Cys-306, Cys-309, His-322, and His-328. Residues 579–617 (EKNSIAEENKAKADQPKDDTKKTETDNQSNAMKEKHGKS) are disordered. Residues 582 to 603 (SIAEENKAKADQPKDDTKKTET) are compositionally biased toward basic and acidic residues. The region spanning 628 to 678 (SLGQLWLELLKFYTLDFALEEYVICVRIQDILTRENKNWPKRRIAIEDPFS) is the PAP-associated 1 domain. The segment at 794 to 816 (GQDSSSLSTSKSSEIEPKLDKKQ) is disordered. The span at 806–816 (SEIEPKLDKKQ) shows a compositional bias: basic and acidic residues. The interval 901 to 1634 (DKFILTSGKP…CATRRCRERC (734 aa)) is sufficient for monouridylation activity. Residues 913–930 (IVCSICKKDGHSKNDCPE) form a CCHC-type 1 zinc finger. Residues 998–1001 (SSKN), 1008–1011 (SDLD), Asn-1081, Lys-1103, 1121–1125 (SYAYI), and His-1237 contribute to the UTP site. 2 residues coordinate Mg(2+): Asp-1009 and Asp-1011. Positions 1184-1237 (SLGELWLGLLRFYTEEFDFKEYVISIRQKKLLTTFEKQWTSKCIAIEDPFDLNH) constitute a PAP-associated 2 domain. A CCHC-type 2 zinc finger spans residues 1293-1310 (RCCRVCGKIGHYMKDCPK). Residues 1321–1348 (KDSEEEKEGNEEEKDSRDVLDPRDLHDT) are disordered. Basic and acidic residues predominate over residues 1334–1348 (KDSRDVLDPRDLHDT). Residues 1357-1374 (LRCFICGDAGHVRRECPE) form a CCHC-type 3 zinc finger. A compositionally biased stretch (low complexity) spans 1401–1426 (AGSAQQQGDQSIRTRQSSECSESPSY). Positions 1401 to 1482 (AGSAQQQGDQ…LYNFPQSPPA (82 aa)) are disordered. A compositionally biased stretch (polar residues) spans 1441 to 1452 (AAITQPSSQPGS). Residues 1453–1470 (QPKLGPPQQGAQPPHQVQ) show a composition bias toward low complexity. Arg-1624 is modified (omega-N-methylarginine).

The protein belongs to the DNA polymerase type-B-like family. As to quaternary structure, interacts with LIN28A in the presence of pre-let-7 RNA. Interacts with T2BP. Interacts with MOV10; the interaction is RNA-dependent. Requires Mg(2+) as cofactor. The cofactor is Mn(2+).

It localises to the nucleus. Its subcellular location is the cytoplasm. It is found in the cytoplasmic ribonucleoprotein granule. The catalysed reaction is RNA(n) + UTP = RNA(n)-3'-uridine ribonucleotide + diphosphate. Uridylyltransferase that mediates the terminal uridylation of mRNAs with short (less than 25 nucleotides) poly(A) tails, hence facilitating global mRNA decay. Essential for both oocyte maturation and fertility. Through 3' terminal uridylation of mRNA, sculpts, with TUT7, the maternal transcriptome by eliminating transcripts during oocyte growth. Involved in microRNA (miRNA)-induced gene silencing through uridylation of deadenylated miRNA targets. Also functions as an integral regulator of microRNA biogenesis using 3 different uridylation mechanisms. Acts as a suppressor of miRNA biogenesis by mediating the terminal uridylation of some miRNA precursors, including that of let-7 (pre-let-7), miR107, miR-143 and miR-200c. Uridylated miRNAs are not processed by Dicer and undergo degradation. Degradation of pre-let-7 contributes to the maintenance of embryonic stem (ES) cell pluripotency. Also catalyzes the 3' uridylation of miR-26A, a miRNA that targets IL6 transcript. This abrogates the silencing of IL6 transcript, hence promoting cytokine expression. In the absence of LIN28A, TUT7 and TUT4 monouridylate group II pre-miRNAs, which includes most of pre-let7 members, that shapes an optimal 3' end overhang for efficient processing. Adds oligo-U tails to truncated pre-miRNAS with a 5' overhang which may promote rapid degradation of non-functional pre-miRNA species. May also suppress Toll-like receptor-induced NF-kappa-B activation via binding to T2BP. Does not play a role in replication-dependent histone mRNA degradation. Due to functional redundancy between TUT4 and TUT7, the identification of the specific role of each of these proteins is difficult. TUT4 and TUT7 restrict retrotransposition of long interspersed element-1 (LINE-1) in cooperation with MOV10 counteracting the RNA chaperonne activity of L1RE1. TUT7 uridylates LINE-1 mRNAs in the cytoplasm which inhibits initiation of reverse transcription once in the nucleus, whereas uridylation by TUT4 destabilizes mRNAs in cytoplasmic ribonucleoprotein granules. The protein is Terminal uridylyltransferase 4 of Homo sapiens (Human).